Reading from the N-terminus, the 112-residue chain is Tetracenomycin-F1 monooxygenase (112 aa).

Positions F11 to V100 constitute an ABM domain.

Homotrimer.

The enzyme catalyses tetracenomycin F1 + O2 = tetracenomycin D3 + H2O + H(+). It functions in the pathway antibiotic biosynthesis; tetracenomycin C biosynthesis. Its activity is regulated as follows. Inhibited by p-chloromercuribenzoic acid, N-ethylmaleimide and diethyl pyrocarbonate. Functionally, oxygenase required for conversion of tetracenomycin F1 to tetracenomycin D3. The sequence is that of Tetracenomycin-F1 monooxygenase (tcmH) from Streptomyces glaucescens.